A 144-amino-acid chain; its full sequence is MVPIKLKGRTISRGCAEGEILISRDPISFLGSVDPKTGIVVEEKHSLAGKSIKGKVLVFPHGKGSTVGSYVMYQLKKNGAAPVAIINLETEPIVAVGAIISEIPLVDMLEKSPYESLKDGDVVQVNGSEGYIELIKPKGSKIEE.

Catalysis depends on Ser65, which acts as the Proton acceptor.

It belongs to the AcnX type II small subunit family. In terms of assembly, heterodimer composed of a large subunit (PMDh-L) and a small subunit (PMDh-S).

It catalyses the reaction (R)-5-phosphomevalonate = (2E)-3-methyl-5-phosphooxypent-2-enoate + H2O. It participates in isoprenoid biosynthesis; isopentenyl diphosphate biosynthesis via mevalonate pathway. Its function is as follows. Component of a hydro-lyase that catalyzes the dehydration of mevalonate 5-phosphate (MVA5P) to form trans-anhydromevalonate 5-phosphate (tAHMP). Involved in the archaeal mevalonate (MVA) pathway, which provides fundamental precursors for isoprenoid biosynthesis, such as isopentenyl diphosphate (IPP) and dimethylallyl diphosphate (DMAPP). The protein is Phosphomevalonate dehydratase small subunit of Methanosarcina acetivorans (strain ATCC 35395 / DSM 2834 / JCM 12185 / C2A).